The following is a 565-amino-acid chain: Probable alpha-L-arabinofuranosidase A (565 aa).

Residues 1–19 (MPLSAAIKSSLSVSVRADA) form the signal peptide. N-linked (GlcNAc...) asparagine glycans are attached at residues N71, N91, N128, N303, N362, N486, and N501.

It belongs to the glycosyl hydrolase 51 family.

The protein resides in the secreted. The catalysed reaction is Hydrolysis of terminal non-reducing alpha-L-arabinofuranoside residues in alpha-L-arabinosides.. Its pathway is glycan metabolism; L-arabinan degradation. Alpha-L-arabinofuranosidase involved in the degradation of arabinoxylan, a major component of plant hemicellulose. Acts only on small linear 1,5-alpha-linked L-arabinofuranosyl oligosaccharides. The sequence is that of Probable alpha-L-arabinofuranosidase A (abfA) from Emericella nidulans (strain FGSC A4 / ATCC 38163 / CBS 112.46 / NRRL 194 / M139) (Aspergillus nidulans).